Here is a 538-residue protein sequence, read N- to C-terminus: Putative cysteine ligase BshC (538 aa).

Residues Ile248–Leu268 adopt a coiled-coil conformation.

This sequence belongs to the BshC family.

Involved in bacillithiol (BSH) biosynthesis. May catalyze the last step of the pathway, the addition of cysteine to glucosamine malate (GlcN-Mal) to generate BSH. This is Putative cysteine ligase BshC from Bacillus cereus (strain ATCC 14579 / DSM 31 / CCUG 7414 / JCM 2152 / NBRC 15305 / NCIMB 9373 / NCTC 2599 / NRRL B-3711).